Here is a 461-residue protein sequence, read N- to C-terminus: Cyclic AMP-responsive element-binding protein 3-like protein 3 (461 aa).

Residues 1–322 (MNTDLAAGKM…STSKSAQTGT (322 aa)) are Cytoplasmic-facing. Residues 51–120 (DQQVLPNPDS…AGCHPAQPGK (70 aa)) form a disordered region. Positions 63 to 85 (FLSSILGSGDSLPSSPLWSPEGS) are enriched in low complexity. Residue S173 is modified to Phosphoserine. Residues 243–306 (VLKKIRRKIR…LSLLEQLKKL (64 aa)) form the bZIP domain. A basic motif region spans residues 245 to 274 (KKIRRKIRNKQSAQESRKKKKEYIDGLETR). The tract at residues 285 to 306 (LQRKVLHLEKQNLSLLEQLKKL) is leucine-zipper. K294 participates in a covalent cross-link: Glycyl lysine isopeptide (Lys-Gly) (interchain with G-Cter in ubiquitin). A helical; Signal-anchor for type II membrane protein membrane pass occupies residues 323–343 (CVAVLLLSFALIILPSISPFG). Residues 344–461 (PNKTESPGDF…AGLEAAGDEL (118 aa)) lie on the Lumenal side of the membrane. Positions 370 to 408 (RVAADAVPGSEAPGPRPEADTTREESPGSPGADWGFQDT) are disordered. S379 carries O-linked (GalNAc...) serine glycosylation. Basic and acidic residues predominate over residues 386-395 (PEADTTREES). 4 N-linked (GlcNAc...) asparagine glycosylation sites follow: N410, N413, N420, and N427. The segment at 442-461 (APGPSTGSGRAGLEAAGDEL) is disordered.

The protein belongs to the bZIP family. ATF subfamily. In terms of assembly, binds DNA as a dimer. May form homodimers. Interacts with ATF6. Interacts with SYNV1/HRD1; this interaction leads to CREB3L3 ubiquitination and proteasomal degradation. Controlled by regulated intramembrane proteolysis (RIP). Following ER stress a fragment containing the cytoplasmic transcription factor domain is released by proteolysis. The cleavage seems to be performed sequentially by site-1 and site-2 proteases (PS1 and PS2). Post-translationally, N- and O-glycosylated. N-glycosylation is required for optimal proteolytic activation. O-glycosylated with core 1 or possibly core 8 glycans. In terms of processing, ubiquitinated at Lys-294 by SYNV1/HRD1 via 'Lys-27'-linked ubiquitin. In terms of tissue distribution, exclusively expressed in liver. Underexpressed in hepatocellular carcinoma tissues.

It is found in the endoplasmic reticulum membrane. The protein resides in the nucleus. Its function is as follows. Transcription factor that may act during endoplasmic reticulum stress by activating unfolded protein response target genes. Activated in response to cAMP stimulation. In vitro, binds to the cAMP response element (CRE) and box-B element. Activates transcription through box-B element. Activates transcription through CRE. May function synergistically with ATF6. In acute inflammatory response, may activate expression of acute phase response (APR) genes. May be involved in growth suppression. Regulates FGF21 transcription. Plays a crucial role in the regulation of triglyceride metabolism and is required for the maintenance of normal plasma triglyceride concentrations. This Homo sapiens (Human) protein is Cyclic AMP-responsive element-binding protein 3-like protein 3 (CREB3L3).